A 537-amino-acid polypeptide reads, in one-letter code: Cytochrome P450 monooxygenase AOL_s00215g282 (537 aa).

The helical transmembrane segment at 9–29 threads the bilayer; the sequence is ATVVLCGSIVTVSIAYVIFVV. A glycan (N-linked (GlcNAc...) asparagine) is linked at Asn126. Cys451 is a binding site for heme.

This sequence belongs to the cytochrome P450 family. The cofactor is heme.

Its subcellular location is the membrane. It participates in secondary metabolite biosynthesis; terpenoid biosynthesis. Functionally, cytochrome P450 monooxygenase; part of the gene cluster that mediates the biosynthesis of sesquiterpenyl epoxy-cyclohexenoids (SECs) such as anthrobotrisins and arthrosporols, metabolites that possess a novel hybrid carbon skeleton consisting of a polyketide-derived epoxycyclohexenol combined with a terpenoid-derived monocyclic sesquiterpenol substructure (PKS-PTS hybrid). The SEC pathway plays an important role for fungal soil colonization via decreasing fungal nematode-capturing ability. Within the pathway, the cytochrome P450 monooxygenase AOL_s00215g282 acts as a m-cresol hydrolase that converts m-cresol to toluquinol. The pathway begins with the biosynthesis of 6-methylsalicylic acid (6-MSA), the first precursor of the polyketide-derived epoxycyclohexenol in arthrosporols, by the polyketide synthase (PKS) AOL_s00215g283 via condensation of 1 acetate and 3 malonate units. The 6-methylsalicylic acid decarboxylase AOL_s00215g281 then catalyzes the decarboxylation of 6-methylsalicylic acid to yield m-cresol. The cytochrome P450 monooxygenase AOL_s00215g282 further oxidizes m-cresol to yield toluquinol. With the assistance of the oxidoreductase AOL_s00215g277, the polyprenyl transferase AOL_s00215g276 catalyzes the farnesylation of toluquinol to produce farnesyl hydroquinone, the hybrid precursor for biosynthesis of SECs. Farnesyl hydroquinone undergoes epoxidation and then subsequent dehydrogenation to form farnesyl epoxy-quinone, the first and simplest SEC. The cytochrome P450 monooxygenase AOL_s00215g278 and the FAD-dependent monooxygenase AOL_s00215g279 might be involved in the oxygenation of the phenol moiety, most likely in the epoxy formation. The cytochrome P450 monooxygenases AOL_s00215g274 and AOL_s00215g280 are involved in specific regional ketone reductions at respectively C-4 and C-1 of farnesyl epoxy-quinone PubMed:33823587. The polypeptide is Cytochrome P450 monooxygenase AOL_s00215g282 (Arthrobotrys oligospora (strain ATCC 24927 / CBS 115.81 / DSM 1491) (Nematode-trapping fungus)).